Here is a 376-residue protein sequence, read N- to C-terminus: Enoyl-[acyl-carrier-protein] reductase, mitochondrial (376 aa).

A mitochondrion-targeting transit peptide spans M1 to R12. The active-site Proton donor is Y79. Residues N160, N183–V186, R206–R208, Y277–M280, Y302–L304, and K368 each bind NADP(+).

It belongs to the zinc-containing alcohol dehydrogenase family. Quinone oxidoreductase subfamily. Homodimer.

It localises to the mitochondrion matrix. It carries out the reaction a 2,3-saturated acyl-[ACP] + NADP(+) = a (2E)-enoyl-[ACP] + NADPH + H(+). Catalyzes the NADPH-dependent reduction of trans-2-enoyl thioesters in mitochondrial fatty acid synthesis (fatty acid synthesis type II). Fatty acid chain elongation in mitochondria uses acyl carrier protein (ACP) as an acyl group carrier, but the enzyme accepts both ACP and CoA thioesters as substrates in vitro. Required for respiration and the maintenance of the mitochondrial compartment. This chain is Enoyl-[acyl-carrier-protein] reductase, mitochondrial (ETR1), found in Yarrowia lipolytica (strain CLIB 122 / E 150) (Yeast).